The following is a 540-amino-acid chain: MSKEIKFSSDARSAMVRGVDILADTVKVTLGPKGRNVVLEKSFGSPLITNDGVTIAKEIELEDHFENMGAKLVSEVASKTNDIAGDGTTTATVLTQAIVREGIKNVTAGANPIGIRRGIETAVAAAVEALKNNAIPVANKEAIAQVAAVSSRSEKVGEYISEAMEKVGKDGVITIEESRGMETELEVVEGMQFDRGYLSQYMVTDSEKMVADLENPYILITDKKISNIQEILPLLESILQSNRPLLIIADDVDGEALPTLVLNKIRGTFNVVAVKAPGFGDRRKAMLEDIAILTGGTVITEDLGLELKDATIEALGQAARVTVDKDSTVIVEGAGNPEAISHRVAVIKSQIETTTSEFDREKLQERLAKLSGGVAVIKVGAATETELKEMKLRIEDALNATRAAVEEGIVAGGGTALANVIPAVATLELTGDEVTGRNIVLRALEEPVRQIAHNAGFEGSIVIDRLKNAELGIGFNAATGEWVNMIDQGIIDPVKVSRSALQNAASVASLILTTEAVVANKPEPVAPAPAMDPSMMGGMM.

ATP is bound by residues 29-32 (TLGP), 86-90 (DGTTT), G413, 476-478 (NAA), and D492.

This sequence belongs to the chaperonin (HSP60) family. Forms a cylinder of 14 subunits composed of two heptameric rings stacked back-to-back. Interacts with the co-chaperonin GroES.

It localises to the cytoplasm. The catalysed reaction is ATP + H2O + a folded polypeptide = ADP + phosphate + an unfolded polypeptide.. Its function is as follows. Together with its co-chaperonin GroES, plays an essential role in assisting protein folding. The GroEL-GroES system forms a nano-cage that allows encapsulation of the non-native substrate proteins and provides a physical environment optimized to promote and accelerate protein folding. The protein is Chaperonin GroEL of Streptococcus pneumoniae (strain P1031).